The chain runs to 151 residues: Deoxyuridine 5'-triphosphate nucleotidohydrolase (151 aa).

Substrate contacts are provided by residues 70 to 72 (RSG), asparagine 83, 87 to 89 (LID), and methionine 97.

It belongs to the dUTPase family. The cofactor is Mg(2+).

It catalyses the reaction dUTP + H2O = dUMP + diphosphate + H(+). It functions in the pathway pyrimidine metabolism; dUMP biosynthesis; dUMP from dCTP (dUTP route): step 2/2. This enzyme is involved in nucleotide metabolism: it produces dUMP, the immediate precursor of thymidine nucleotides and it decreases the intracellular concentration of dUTP so that uracil cannot be incorporated into DNA. The polypeptide is Deoxyuridine 5'-triphosphate nucleotidohydrolase (Actinobacillus pleuropneumoniae serotype 7 (strain AP76)).